Consider the following 443-residue polypeptide: Thymidine phosphorylase (443 aa).

This sequence belongs to the thymidine/pyrimidine-nucleoside phosphorylase family. As to quaternary structure, homodimer.

It carries out the reaction thymidine + phosphate = 2-deoxy-alpha-D-ribose 1-phosphate + thymine. It functions in the pathway pyrimidine metabolism; dTMP biosynthesis via salvage pathway; dTMP from thymine: step 1/2. The enzymes which catalyze the reversible phosphorolysis of pyrimidine nucleosides are involved in the degradation of these compounds and in their utilization as carbon and energy sources, or in the rescue of pyrimidine bases for nucleotide synthesis. This chain is Thymidine phosphorylase, found in Aeromonas hydrophila subsp. hydrophila (strain ATCC 7966 / DSM 30187 / BCRC 13018 / CCUG 14551 / JCM 1027 / KCTC 2358 / NCIMB 9240 / NCTC 8049).